Here is a 687-residue protein sequence, read N- to C-terminus: Chloride channel protein ClC-Ka (687 aa).

4 consecutive transmembrane segments (helical) span residues 52–72 (FLMTLGVLMALVSYAMNFAIG), 161–181 (LFLGKVGPFVHLSVMIAAYLG), 202–222 (VAAAAVGVATVFAAPFSGVLF), and 236–256 (YWRGFFAATCGAFIFRLLAVF). Ca(2+)-binding residues include Glu259, Glu261, Asp278, and Glu281. The next 6 helical transmembrane spans lie at 282-302 (IFFFVALGGICGVLSCAYLFC), 329-349 (ALATLLLASITYPPGVGHFLA), 396-416 (FTIFGTLAFFLVMKFWMLILA), 417-437 (TTIPMPAGYFMPIFILGAAIG), 452-472 (IVTGGVTNPIMPGGYALAGAA), and 486-506 (LLAFELTGQIVHALPVLMAVL). Residues 507–687 (AANAIAQSCQ…SNLTNPPAPK (181 aa)) are Cytoplasmic-facing. CBS domains are found at residues 551–609 (MNHS…EPPS) and 626–684 (CPTE…TNPP).

This sequence belongs to the chloride channel (TC 2.A.49) family. CLCNKA subfamily. In terms of assembly, homodimer. Interacts with BSND.

The protein localises to the basolateral cell membrane. The enzyme catalyses chloride(in) = chloride(out). The catalysed reaction is bromide(in) = bromide(out). It carries out the reaction nitrate(in) = nitrate(out). It catalyses the reaction iodide(out) = iodide(in). With respect to regulation, activated by extracellular Ca(2+) and inhibited by extracellular acidic pH. Anion-selective channel permeable to small monovalent anions with ion selectivity for chloride &gt; bromide &gt; nitrate &gt; iodide. Forms a homodimeric channel where each subunit has its own ion conduction pathway. May conduct double-barreled currents controlled by two types of gates, two fast gates that control each subunit independently and a slow common gate that opens and shuts off both subunits simultaneously. Assembles with the regulatory subunit BSND/Barttin for sorting at the basolateral plasma membrane domain and functional switch to the ion conducting state. CLCNKA:BSND channels display mostly a linear current-voltage relationship with fast gating at negative potentials. Mediates transepithelial chloride transport from the lumen to interstitial compartment along the thin ascending limb of Henle's loop, contributing to generation of hypertonic medullary interstitium as a countercurrent system to achieve urine concentration. Conducts chloride currents in the stria vascularis of the inner ear to establish the endocochlear potential necessary for normal hearing. This Homo sapiens (Human) protein is Chloride channel protein ClC-Ka.